Here is a 710-residue protein sequence, read N- to C-terminus: MAGGPGPGEPVVPGAQHFLYEVPPWVMCRFYKVMDALEPADWCQFAALIVRDQTELRLCERSEQRTASVLWPWINRNARVADLVHILTHLQLLRARDIITAWHPPAPVVPPSTAAPRPSSISAGSEAGDWSPRKLQSSASTFLSPAFPGSQTHSESELLQVPLPVSLGPPLPSSAPSSTKSSPESPVSGLQRAHPSPFCWPFCEISQGTCNFSEELRIGEGGFGCVYRAVMRNTTYAVKRLKEEADLEWTMVKQSFLTEVEQLSRFRHPNIVDFAGYCAESGLYCLVYGFLPNGSLEDQLHLQTQACSPLSWPQRLDILLGTARAIQFLHQDSPSLIHGDIKSSNVLLDERLMPKLGDFGLARFSRFAGAKASQSSTVARTSTVRGTLAYLPEEYIKTGRLAVDTDTFSFGVVILETLAGQRAVRTQGAKTKYLKDLIEDEAEEAGVTLKSTQPTLWVGVATDAWAAPIAAQIYKKHLDSRPGPCPPQLGLALAQLACCCMHRRAKKRPPMTQVYKRLEGLQAGPPWELEVAGHGSPSPQENSYMSTTGSAQSGDEPWQPLVVTTRAPAQAAQQLQRSPNQPVESDESVPGLSATLHSWHLTPGSHPSPASFREASCTQGGTTRESSVRSSPGFQPTTMEGSPTGSSSLLSSEPPQIIINPARQKMVQKLALYEEGVLDSLQLLSSGFFPGLDLEPEKSQGPEESDEFQS.

The region spanning 27 to 106 is the Death domain; sequence MCRFYKVMDA…DIITAWHPPA (80 aa). Thr66 carries the post-translational modification Phosphothreonine; by PKC/PRKCI. Residues 107-133 form a disordered region; the sequence is PVVPPSTAAPRPSSISAGSEAGDWSPR. The proST region stretch occupies residues 110 to 211; that stretch reads PPSTAAPRPS…FCEISQGTCN (102 aa). The span at 111-123 shows a compositional bias: low complexity; sequence PSTAAPRPSSISA. Residue Ser131 is modified to Phosphoserine. Glycyl lysine isopeptide (Lys-Gly) (interchain with G-Cter in ubiquitin) cross-links involve residues Lys134 and Lys180. The tract at residues 169 to 190 is disordered; that stretch reads PPLPSSAPSSTKSSPESPVSGL. A compositionally biased stretch (low complexity) spans 174–188; the sequence is SAPSSTKSSPESPVS. Position 209 is a phosphothreonine; by IRAK4 (Thr209). A Protein kinase domain is found at 212-521; it reads FSEELRIGEG…TQVYKRLEGL (310 aa). ATP is bound by residues 218–226 and Lys239; that span reads IGEGGFGCV. Catalysis depends on Asp340, which acts as the Proton acceptor. Residues 342–345 and Asp358 contribute to the ATP site; that span reads KSSN. Ser375 is subject to Phosphoserine. Thr387 is modified (phosphothreonine). Disordered stretches follow at residues 527–655 and 689–710; these read WELE…SEPP and FPGL…EFQS. A compositionally biased stretch (polar residues) spans 537 to 553; it reads PSPQENSYMSTTGSAQS. Ser553 carries the post-translational modification Phosphoserine. Low complexity predominate over residues 567–576; it reads APAQAAQQLQ. Residues 616 to 639 are compositionally biased toward polar residues; it reads SCTQGGTTRESSVRSSPGFQPTTM. Residues 640–654 are compositionally biased toward low complexity; that stretch reads EGSPTGSSSLLSSEP.

Belongs to the protein kinase superfamily. TKL Ser/Thr protein kinase family. Pelle subfamily. Homodimer. Forms a complex with TRAF6, PELI1, IRAK4 and MYD88. Direct binding of SMAD6 to PELI1 prevents complex formation and hence negatively regulates IL1R-TLR signaling and eventually NF-kappa-B-mediated gene expression. The TRAF6-PELI1-IRAK4-MYD88 complex recruits MAP3K7/TAK1, TAB1 and TAB2 to mediate NF-kappa-B activation. Interaction with MYD88 recruits IRAK1 to the stimulated receptor complex. Interacts with TOLLIP; this interaction occurs in the cytosol prior to receptor activation. Interacts with IL1RL1. Interacts (when polyubiquitinated) with IKBKG/NEMO. Interacts with RSAD2/viperin. Interacts with IRAK1BP1. Interacts with PELI2. Interacts with ZC3H12A; this interaction increases the interaction between ZC3H12A and IKBKB/IKKB. Interacts with IRAK4. Interacts with PELI3. Interacts with PELI1 and TRAF6. Interacts with INAVA; the interaction takes place upon PRR stimulation. Interacts (via C-terminus) with NFATC4 (via N-terminus). Mg(2+) is required as a cofactor. Following recruitment on the activated receptor complex, phosphorylated on Thr-209, probably by IRAK4, resulting in a conformational change of the kinase domain, allowing further phosphorylations to take place. Thr-387 phosphorylation in the activation loop is required to achieve full enzymatic activity. Post-translationally, polyubiquitinated by TRAF6 after cell stimulation with IL-1-beta by PELI1, PELI2 and PELI3. Polyubiquitination occurs with polyubiquitin chains linked through 'Lys-63'. Ubiquitination promotes interaction with NEMO/IKBKG. Also sumoylated; leading to nuclear translocation. As to expression, highly expressed in liver, followed by kidney and skeletal muscle.

The protein localises to the cytoplasm. It localises to the nucleus. Its subcellular location is the lipid droplet. It catalyses the reaction L-seryl-[protein] + ATP = O-phospho-L-seryl-[protein] + ADP + H(+). The catalysed reaction is L-threonyl-[protein] + ATP = O-phospho-L-threonyl-[protein] + ADP + H(+). In terms of biological role, serine/threonine-protein kinase that plays a critical role in initiating innate immune response against foreign pathogens. Involved in Toll-like receptor (TLR) and IL-1R signaling pathways. Is rapidly recruited by MYD88 to the receptor-signaling complex upon TLR activation. Association with MYD88 leads to IRAK1 phosphorylation by IRAK4 and subsequent autophosphorylation and kinase activation. Phosphorylates E3 ubiquitin ligases Pellino proteins (PELI1, PELI2 and PELI3) to promote pellino-mediated polyubiquitination of IRAK1. Then, the ubiquitin-binding domain of IKBKG/NEMO binds to polyubiquitinated IRAK1 bringing together the IRAK1-MAP3K7/TAK1-TRAF6 complex and the NEMO-IKKA-IKKB complex. In turn, MAP3K7/TAK1 activates IKKs (CHUK/IKKA and IKBKB/IKKB) leading to NF-kappa-B nuclear translocation and activation. Alternatively, phosphorylates TIRAP to promote its ubiquitination and subsequent degradation. Phosphorylates the interferon regulatory factor 7 (IRF7) to induce its activation and translocation to the nucleus, resulting in transcriptional activation of type I IFN genes, which drive the cell in an antiviral state. When sumoylated, translocates to the nucleus and phosphorylates STAT3. The sequence is that of Interleukin-1 receptor-associated kinase 1 (Irak1) from Mus musculus (Mouse).